Consider the following 301-residue polypeptide: Sulfate adenylyltransferase subunit 2 (301 aa).

The tract at residues 279–301 is disordered; it reads RQGRLIDHDQDGSMEKKKQEGYF.

This sequence belongs to the PAPS reductase family. CysD subfamily. In terms of assembly, heterodimer composed of CysD, the smaller subunit, and CysN.

It catalyses the reaction sulfate + ATP + H(+) = adenosine 5'-phosphosulfate + diphosphate. It functions in the pathway sulfur metabolism; hydrogen sulfide biosynthesis; sulfite from sulfate: step 1/3. In terms of biological role, with CysN forms the ATP sulfurylase (ATPS) that catalyzes the adenylation of sulfate producing adenosine 5'-phosphosulfate (APS) and diphosphate, the first enzymatic step in sulfur assimilation pathway. APS synthesis involves the formation of a high-energy phosphoric-sulfuric acid anhydride bond driven by GTP hydrolysis by CysN coupled to ATP hydrolysis by CysD. This Geotalea uraniireducens (strain Rf4) (Geobacter uraniireducens) protein is Sulfate adenylyltransferase subunit 2.